The sequence spans 585 residues: uncharacterized protein (585 aa).

This is an uncharacterized protein from Escherichia coli (strain K12).